A 569-amino-acid chain; its full sequence is Hexose transporter HXT8 (569 aa).

Positions 1 to 38 (MTDRKTNLPEEPIFEEAEDDGCPSIENSSHLSVPTVEE) are disordered. Residues 1 to 61 (MTDRKTNLPE…EVVVPEKPAS (61 aa)) lie on the Cytoplasmic side of the membrane. Over residues 12 to 21 (PIFEEAEDDG) the composition is skewed to acidic residues. Residues 62-82 (AYATVSIMCLCMAFGGFMSGW) traverse the membrane as a helical segment. At 83–118 (DTGTISGFVNQTDFLRRFGNYSHSKNTYYLSNVRTG) the chain is on the extracellular side. 2 N-linked (GlcNAc...) asparagine glycosylation sites follow: Asn92 and Asn102. The chain crosses the membrane as a helical span at residues 119–139 (LIVSIFNVGSAIGCLFLSKLG). Topologically, residues 140 to 145 (DIYGRC) are cytoplasmic. The chain crosses the membrane as a helical span at residues 146–166 (MGLIIVIVVYMVGIVIQIASI). Topologically, residues 167–176 (DKWYQYFIGR) are extracellular. A helical membrane pass occupies residues 177–197 (IIAGIGAGSISVLAPMLISET). The Cytoplasmic segment spans residues 198–203 (APKHIR). Residues 204 to 224 (GTLLACWQLMVTFAIFLGYCT) form a helical membrane-spanning segment. Residues 225 to 238 (NYGTKTYSNSVQWR) lie on the Extracellular side of the membrane. Residues 239–259 (VPLGLCFAWAIIMIGGMTFVP) traverse the membrane as a helical segment. Residues 260–342 (ESPRFLVQVG…INSLQQLTGD (83 aa)) are Cytoplasmic-facing. The helical transmembrane segment at 343-359 (NYFFYYGTTIFKSVGMN) threads the bilayer. Residues 360-365 (DSFETS) are Extracellular-facing. The helical transmembrane segment at 366 to 383 (IVLGIVNFASCFFSLYSV) threads the bilayer. Over 384–390 (DKLGRRR) the chain is Cytoplasmic. A helical membrane pass occupies residues 391 to 411 (CLLLGAATMTACMVIYASVGV). Residues 412-433 (TRLYPNGKSEPSSKGAGNCTIV) are Extracellular-facing. Asn429 carries an N-linked (GlcNAc...) asparagine glycan. The chain crosses the membrane as a helical span at residues 434-454 (FTCFYIFCFSCTWGPVCYVII). Over 455–471 (SETFPLRVRSKCMSVAT) the chain is Cytoplasmic. Residues 472–492 (AANLLWGFLIGFFTPFITSAI) traverse the membrane as a helical segment. Residue Asn493 is a topological domain, extracellular. A helical membrane pass occupies residues 494 to 514 (FYYGYVFMGCLAFSYFYVFFF). At 515 to 569 (VPETKGLTLEEVDEMWMDGVLPWKSESWVPASRRDGDYDNEKLQHDEKPFYKRMF) the chain is on the cytoplasmic side.

This sequence belongs to the major facilitator superfamily. Sugar transporter (TC 2.A.1.1) family.

The protein resides in the membrane. Its function is as follows. Probable glucose transporter. The protein is Hexose transporter HXT8 (HXT8) of Saccharomyces cerevisiae (strain ATCC 204508 / S288c) (Baker's yeast).